Here is a 454-residue protein sequence, read N- to C-terminus: Inner membrane transport protein YajR (454 aa).

Residues 1–14 lie on the Periplasmic side of the membrane; that stretch reads MNDYKMTPGERRAT. A helical transmembrane segment spans residues 15–35; it reads WGLGTVFSLRMLGMFMVLPVL. The Cytoplasmic segment spans residues 36–47; sequence TTYGMALQGASE. A helical membrane pass occupies residues 48–68; the sequence is ALIGIAIGIYGLTQAVFQIPF. At 69–84 the chain is on the periplasmic side; sequence GLLSDRIGRKPLIVGG. The chain crosses the membrane as a helical span at residues 85-105; it reads LAVFAAGSVIAALSDSIWGII. Over 106–137 the chain is Cytoplasmic; that stretch reads LGRALQGSGAIAAAVMALLSDLTREQNRTKAM. The helical transmembrane segment at 138–158 threads the bilayer; that stretch reads AFIGVSFGITFAIAMVLGPII. Topologically, residues 159-165 are periplasmic; it reads THKLGLH. Residues 166–186 form a helical membrane-spanning segment; sequence ALFWMIAILATTGIALTIWVV. The Cytoplasmic segment spans residues 187-216; the sequence is PNSSTHVLNRESGMVKGSFSKVLAEPRLLK. The helical transmembrane segment at 217–237 threads the bilayer; sequence LNFGIMCLHILLMSTFVALPG. Residues 238–252 are Periplasmic-facing; it reads QLADAGFPAAEHWKV. A helical transmembrane segment spans residues 253–273; sequence YLATMLIAFGSVVPFIIYAEV. The Cytoplasmic segment spans residues 274–279; sequence KRKMKQ. A helical transmembrane segment spans residues 280–300; it reads VFVFCVGLIVVAEIVLWNAQT. The Periplasmic portion of the chain corresponds to 301 to 306; that stretch reads QFWQLV. The helical transmembrane segment at 307 to 327 threads the bilayer; the sequence is VGVQLFFVAFNLMEALLPSLI. At 328-340 the chain is on the cytoplasmic side; that stretch reads SKESPAGYKGTAM. The helical transmembrane segment at 341 to 361 threads the bilayer; the sequence is GVYSTSQFLGVAIGGSLGGWI. Over 362–363 the chain is Periplasmic; it reads NG. The chain crosses the membrane as a helical span at residues 364–384; that stretch reads MFDGQGVFLAGAMLAAVWLTV. At 385–454 the chain is on the cytoplasmic side; sequence ASTMKEPPYV…FEIEQAIRQA (70 aa).

Belongs to the major facilitator superfamily.

It localises to the cell inner membrane. This Escherichia coli (strain K12) protein is Inner membrane transport protein YajR (yajR).